Here is a 663-residue protein sequence, read N- to C-terminus: 72 kDa type IV collagenase (663 aa).

An N-terminal signal peptide occupies residues 1-26 (MKTHSVFGFFFKVLLIQVYLFNKTLA). Positions 27–106 (APSPIIKFPG…PRCGNPDVAN (80 aa)) are cleaved as a propeptide — activation peptide. The Cysteine switch signature appears at 97–104 (PRCGNPDV). Position 99 (Cys-99) interacts with Zn(2+). The interval 107–218 (YNFFPRKPKW…LWTLGEGQVV (112 aa)) is collagenase-like 1. Asp-131 and Asp-165 together coordinate Ca(2+). The Zn(2+) site is built by His-175 and Asp-177. Ca(2+) is bound by residues Asp-182 and Gly-183. His-190 lines the Zn(2+) pocket. Ca(2+) contacts are provided by Gly-197, Gly-199, and Asp-201. His-203 contributes to the Zn(2+) binding site. Positions 205, 206, and 208 each coordinate Ca(2+). The tract at residues 219–393 (RVKYGNADGE…WGFCPDQGYS (175 aa)) is collagen-binding. Fibronectin type-II domains follow at residues 225 to 273 (ADGE…FCPH), 283 to 331 (GDGQ…FCPE), and 341 to 389 (SEGA…FCPD). 6 cysteine pairs are disulfide-bonded: Cys-230-Cys-256, Cys-244-Cys-271, Cys-288-Cys-314, Cys-302-Cys-329, Cys-346-Cys-372, and Cys-360-Cys-387. Residues 394-468 (LFLVAAHEFG…GPRPTLGPVT (75 aa)) form a collagenase-like 2 region. Position 400 (His-400) interacts with Zn(2+). Glu-401 is an active-site residue. His-404 and His-410 together coordinate Zn(2+). A disordered region spans residues 445-464 (SPDVEPGPGPGPGPGPRPTL). Positions 449-463 (EPGPGPGPGPGPRPT) are enriched in pro residues. The cysteines at positions 472 and 663 are disulfide-linked. 4 Hemopexin repeats span residues 475 to 519 (DIVF…WPDL), 520 to 566 (PEKI…GLPP), 568 to 616 (VQRI…WNGV), and 617 to 663 (PDNL…WLGC). The Ca(2+) site is built by Asp-479, Asp-524, Asp-572, and Asp-621.

It belongs to the peptidase M10A family. In terms of assembly, ligand for integrin alpha-V/beta-3. Requires Ca(2+) as cofactor. It depends on Zn(2+) as a cofactor. In terms of processing, the propeptide is processed by MMP14 (MT-MMP1) and MMP16 (MT-MMP3). As to expression, produced by normal skin fibroblasts.

It is found in the secreted. Its subcellular location is the extracellular space. It localises to the extracellular matrix. It catalyses the reaction Cleavage of gelatin type I and collagen types IV, V, VII, X. Cleaves the collagen-like sequence Pro-Gln-Gly-|-Ile-Ala-Gly-Gln.. The sequence is that of 72 kDa type IV collagenase (MMP2) from Gallus gallus (Chicken).